The primary structure comprises 290 residues: 4-diphosphocytidyl-2-C-methyl-D-erythritol kinase (290 aa).

Residue Lys12 is part of the active site. 97–107 is a binding site for ATP; sequence PVASGIGGGSA. The active site involves Asp139.

It belongs to the GHMP kinase family. IspE subfamily.

It carries out the reaction 4-CDP-2-C-methyl-D-erythritol + ATP = 4-CDP-2-C-methyl-D-erythritol 2-phosphate + ADP + H(+). It functions in the pathway isoprenoid biosynthesis; isopentenyl diphosphate biosynthesis via DXP pathway; isopentenyl diphosphate from 1-deoxy-D-xylulose 5-phosphate: step 3/6. Its function is as follows. Catalyzes the phosphorylation of the position 2 hydroxy group of 4-diphosphocytidyl-2C-methyl-D-erythritol. In Parvibaculum lavamentivorans (strain DS-1 / DSM 13023 / NCIMB 13966), this protein is 4-diphosphocytidyl-2-C-methyl-D-erythritol kinase.